The chain runs to 203 residues: Large ribosomal subunit protein bL25 (203 aa).

It belongs to the bacterial ribosomal protein bL25 family. CTC subfamily. As to quaternary structure, part of the 50S ribosomal subunit; part of the 5S rRNA/L5/L18/L25 subcomplex. Contacts the 5S rRNA. Binds to the 5S rRNA independently of L5 and L18.

In terms of biological role, this is one of the proteins that binds to the 5S RNA in the ribosome where it forms part of the central protuberance. The polypeptide is Large ribosomal subunit protein bL25 (Wolbachia pipientis wMel).